Reading from the N-terminus, the 263-residue chain is tRNA (guanine-N(7)-)-methyltransferase (263 aa).

A compositionally biased stretch (polar residues) spans 1–10 (MLPQDPSTEP). Residues 1–38 (MLPQDPSTEPTPADDAAPVDSAGQASAPSPADPEGVAH) form a disordered region. Residues Glu-91, Glu-116, Asp-143, and Asp-166 each contribute to the S-adenosyl-L-methionine site. Asp-166 is an active-site residue. Substrate is bound at residue Lys-170. The tract at residues 172–177 (RHNKRR) is interaction with RNA. Substrate is bound by residues Asp-202 and 240–243 (TKFE).

This sequence belongs to the class I-like SAM-binding methyltransferase superfamily. TrmB family.

It carries out the reaction guanosine(46) in tRNA + S-adenosyl-L-methionine = N(7)-methylguanosine(46) in tRNA + S-adenosyl-L-homocysteine. The protein operates within tRNA modification; N(7)-methylguanine-tRNA biosynthesis. Its function is as follows. Catalyzes the formation of N(7)-methylguanine at position 46 (m7G46) in tRNA. The chain is tRNA (guanine-N(7)-)-methyltransferase from Cupriavidus necator (strain ATCC 17699 / DSM 428 / KCTC 22496 / NCIMB 10442 / H16 / Stanier 337) (Ralstonia eutropha).